The following is a 564-amino-acid chain: Multidrug resistance protein 1 (564 aa).

At 1–115 (MHYRFLRDSF…NPQNWPTLQK (115 aa)) the chain is on the cytoplasmic side. Residues 60–101 (IDNQGEPNSSQSSSSNNTIVDNNNNNDNDVDGDKIVVTWDGD) are disordered. The span at 67–86 (NSSQSSSSNNTIVDNNNNND) shows a compositional bias: low complexity. A helical membrane pass occupies residues 116–136 (AFFIFQISFLTTSVYMGSAVY). Residues 137–151 (TPGIEELMHDFGIGR) are Extracellular-facing. Residues 152 to 172 (VVATLPLTLFVIGYGVGPLVF) form a helical membrane-spanning segment. Residues 173 to 183 (SPMSENAIFGR) lie on the Cytoplasmic side of the membrane. Residues 184–204 (TSIYIITLFLFVILQIPTALV) traverse the membrane as a helical segment. Residues 205–206 (NN) lie on the Extracellular side of the membrane. Residues 207–227 (IAGLCILRFLGGFFASPCLAT) traverse the membrane as a helical segment. Residues 228-242 (GGASVADVVKFWNLP) lie on the Cytoplasmic side of the membrane. The chain crosses the membrane as a helical span at residues 243–263 (VGLAAWSLGAVCGPSFGPFFG). The Extracellular segment spans residues 264-273 (SILTVKASWR). Residues 274–294 (WTFWFMCIISGFSFVMLCFTL) form a helical membrane-spanning segment. Over 295–350 (PETFGKTLLYRKAKRLRAITGNDRITSEGEVENSKMTSHELIIDTLWRPLEITVME) the chain is Cytoplasmic. The helical transmembrane segment at 351–371 (PVVLLINIYIAMVYSILYLFF) threads the bilayer. Topologically, residues 372 to 390 (EVFPIYFVGVKHFTLVELG) are extracellular. The chain crosses the membrane as a helical span at residues 391-411 (TTYMSIVIGIVIAAFIYIPVI). Residues 412-428 (RQKFTKPILRQEQVFPE) lie on the Cytoplasmic side of the membrane. The helical transmembrane segment at 429–449 (VFIPIAIVGGILLTSGLFIFG) threads the bilayer. At 450 to 455 (WSANRT) the chain is on the extracellular side. Residue asparagine 453 is glycosylated (N-linked (GlcNAc...) asparagine). Residues 456 to 476 (THWVGPLFGAATTASGAFLIF) traverse the membrane as a helical segment. The Cytoplasmic portion of the chain corresponds to 477–503 (QTLFNFMGASFKPHYIASVFASNDLFR). The chain crosses the membrane as a helical span at residues 504 to 524 (SVIASVFPLFGAPLFDNLATP). Over 525 to 528 (EYPV) the chain is Extracellular. Residues 529–549 (AWGSSVLGFITLVMIAIPVLF) form a helical membrane-spanning segment. At 550-564 (YLNGPKLRARSKYAN) the chain is on the cytoplasmic side.

Belongs to the major facilitator superfamily. CAR1 family.

The protein resides in the cell membrane. Functionally, plasma membrane multidrug efflux pump that confers resistance to numerous chemicals including azoles such as fluconazole, voriconazole, and benztriazoles, as well as to benomyl, cycloheximide, methotrexate, 4-nitroquinoline-N-oxide, sulfometuron methyl, cerulenin, and brefeldin A. The chain is Multidrug resistance protein 1 from Candida albicans (strain SC5314 / ATCC MYA-2876) (Yeast).